We begin with the raw amino-acid sequence, 7096 residues long: Replicase polyprotein 1ab (7096 aa).

The disordered stretch occupies residues 1–147; it reads MESLVPGFNE…ADLKSFDLGD (147 aa). Topologically, residues 1-2225 are cytoplasmic; that stretch reads MESLVPGFNE…NYLKSPNFSK (2225 aa). Residues 12-127 form the CoV Nsp1 globular domain; it reads THVQLSLPVL…YRKVLLRKNG (116 aa). One can recognise a BetaCoV Nsp1 C-terminal domain in the interval 148–179; that stretch reads ELGTDPYEDFQENWNTKHSSGVTRELMRELNG. The tract at residues 154 to 180 is binding to 40s ribosome mRNA entry channel; that stretch reads YEDFQENWNTKHSSGVTRELMRELNGG. Positions 183–456 constitute a CoV Nsp2 N-terminal domain; sequence TRYVDNNFCG…NDNLLEILQK (274 aa). Residues Cys200, Cys231, His234, His236, Cys323, Cys326, Cys341, Cys344, Cys370, Cys373, His382, and Cys416 each contribute to the Zn(2+) site. Residues 200-236 are C2H2; sequence CIKDLLARAGKASCTLSEQLDFIDTKRGVYCCREHEH. The segment at 323–344 is C4; that stretch reads CDHCGETSWQTGDFVKATCEFC. The interval 370–416 is C2HC; the sequence is CPACHNSEVGPEHSLAEYHNESGLKTILRKGGRTIAFGGCVFSYVGC. The CoV Nsp2 middle domain occupies 458–688; that stretch reads KVNINIVGDF…FKLVNKFLAL (231 aa). LRR repeat units follow at residues 545–569 and 697–719; these read RSIF…AITI and GAKL…LYRK. Residues 690-818 form the CoV Nsp2 C-terminal domain; the sequence is ADSIIIGGAK…TNNTFTLKGG (129 aa). The 109-residue stretch at 821–929 folds into the Ubiquitin-like 1 domain; that stretch reads TKVTFGDDTV…MYCSFYPPDE (109 aa). The tract at residues 926-999 is disordered; it reads PPDEDEEEGD…QQDGSEDNQT (74 aa). 2 stretches are compositionally biased toward acidic residues: residues 927-942 and 971-984; these read PDED…EEFE and PEEE…DDDS. 3 consecutive Macro domains span residues 1025–1194, 1231–1359, and 1367–1494; these read VNSF…LEMK, KIKA…LPSI, and ILGT…TSSS. One can recognise a DPUP domain in the interval 1496 to 1561; the sequence is TPEEHFIETI…TFDNLKTLLS (66 aa). In terms of domain architecture, Ubiquitin-like 2 spans 1565–1620; that stretch reads VRTIKVFTTVDNINLHTQVVDMSMTYGQQFGPTYLDGADVTKIKPHNSHEGKTFYV. The Peptidase C16 domain maps to 1634 to 1898; the sequence is YYHTTDPSFL…CTEIDPKLDN (265 aa). Cys1674 serves as the catalytic For PL-PRO activity. Residues 1680 to 1702 form an LRR 3 repeat; that stretch reads LLTLQQIELKFNPPALQDAYYRA. Zn(2+)-binding residues include Cys1752, Cys1755, Cys1787, and Cys1789. Residues 1752-1789 form a C4-type zinc finger; it reads CKTCGQQQTTLKGVEAVMYMGTLSYEQFKKGVQIPCTC. Residues His1835 and Asp1849 each act as for PL-PRO activity in the active site. One can recognise a Nucleic acid-binding domain in the interval 1911 to 2021; it reads PIDLVPNQPY…CLWSTKPVET (111 aa). The G2M domain maps to 2046–2155; the sequence is PVSEEVVENP…LNKVVSTTTN (110 aa). The chain crosses the membrane as a helical span at residues 2226 to 2246; that stretch reads LINIIIWFLLLSVCLGSLIYS. Over 2247–2317 the chain is Lumenal; the sequence is TAALGVLMSN…QITISSFKWD (71 aa). Residues 2247 to 2317 form the 3Ecto domain; that stretch reads TAALGVLMSN…QITISSFKWD (71 aa). Intrachain disulfides connect Cys2263–Cys2291 and Cys2282–Cys2288. A helical membrane pass occupies residues 2318 to 2338; the sequence is LTAFGLVAEWFLAYILFTRFF. Over 2339 to 2775 the chain is Cytoplasmic; the sequence is YVLGLAAIMQ…VNNWLKQLIK (437 aa). A Y1 region spans residues 2395–2485; the sequence is KSYVHVVDGC…QFKRPINPTD (91 aa). Residues 2395 to 2763 enclose the CoV Nsp3 Y domain; it reads KSYVHVVDGC…VTTKIALKGG (369 aa). Positions 2399, 2404, 2409, 2412, 2445, 2448, 2452, and 2455 each coordinate Zn(2+). The ZF1 stretch occupies residues 2399–2412; that stretch reads HVVDGCNSSTCMMC. The ZF2 stretch occupies residues 2445–2455; the sequence is CKLHNWNCVNC. The Y2 stretch occupies residues 2486-2580; sequence QSSYIVDSVT…LLDQALVSDV (95 aa). The interval 2486–2763 is coV-Y; it reads QSSYIVDSVT…VTTKIALKGG (278 aa). Residues 2581-2662 are Y3; that stretch reads GDSAEVAVKM…ECLKLSHQSD (82 aa). The tract at residues 2663–2763 is Y4; sequence IEVTGDSCNN…VTTKIALKGG (101 aa). Residues 2776–2796 form a helical membrane-spanning segment; the sequence is VTLVFLFVAAIFYLITPVHVM. Residues 2797 to 3044 are Lumenal-facing; the sequence is SKHTDFSSEI…IQPIGALDIS (248 aa). A helical membrane pass occupies residues 3045-3065; sequence ASIVAGGIVAIVVTCLAYYFM. Residues 3066 to 3099 are Cytoplasmic-facing; that stretch reads RFRRAFGEYSHVVAFNTLLFLMSFTVLCLTPVYS. Residues 3100–3120 form a helical membrane-spanning segment; the sequence is FLPGVYSVIYLYLTFYLTNDV. At 3121–3127 the chain is on the lumenal side; the sequence is SFLAHIQ. The chain crosses the membrane as a helical span at residues 3128–3148; that stretch reads WMVMFTPLVPFWITIAYIICI. Over 3149–3586 the chain is Cytoplasmic; the sequence is STKHFYWFFS…KGTHHWLLLT (438 aa). Residues 3165–3263 form the Nsp4C domain; sequence VVFNGVSFST…QTSITSAVLQ (99 aa). One copy of the LRR 4 repeat lies at 3185-3206; sequence LNKEMYLKLRSDVLLPLTQYNR. The 306-residue stretch at 3264-3569 folds into the Peptidase C30 domain; it reads SGFRKMAFPS…VRQCSGVTFQ (306 aa). A Glycyl lysine isopeptide (Lys-Gly) (interchain with G-Cter in ubiquitin) cross-link involves residue Lys3268. The active-site For 3CL-PRO activity is His3304. Residue Lys3353 forms a Glycyl lysine isopeptide (Lys-Gly) (interchain with G-Cter in ubiquitin) linkage. Cys3408 serves as the catalytic Nucleophile; for 3CL-PRO activity. A helical transmembrane segment spans residues 3587 to 3607; that stretch reads ILTSLLVLVQSTQWSLFFFLY. A topological domain (lumenal) is located at residue Glu3608. The helical transmembrane segment at 3609–3629 threads the bilayer; sequence NAFLPFAMGIIAMSAFAMMFV. The Cytoplasmic segment spans residues 3630 to 3634; it reads KHKHA. The helical transmembrane segment at 3635–3655 threads the bilayer; it reads FLCLFLLPSLATVAYFNMVYM. Residues 3656–3673 lie on the Lumenal side of the membrane; sequence PASWVMRIMTWLDMVDTS. Residues 3674–3694 form a helical membrane-spanning segment; the sequence is LSGFKLKDCVMYASAVVLLIL. Residues 3695 to 3729 are Cytoplasmic-facing; the sequence is MTARTVYDDGARRVWTLMNVLTLVYKVYYGNALDQ. Residues 3730-3750 form a helical membrane-spanning segment; the sequence is AISMWALIISVTSNYSGVVTT. Residues 3751-3778 lie on the Lumenal side of the membrane; it reads VMFLARGIVFMCVEYCPIFFITGNTLQC. Residues 3779-3799 form a helical membrane-spanning segment; sequence IMLVYCFLGYFCTCYFGLFCL. Over 3800–7096 the chain is Cytoplasmic; that stretch reads LNRYFRLTLG…VISSDVLVNN (3297 aa). Positions 3860–3942 constitute a RdRp Nsp7 cofactor domain; sequence SKMSDVKCTS…EMLDNRATLQ (83 aa). The segment at 3931 to 4020 is disordered; it reads CEEMLDNRAT…QMYKQARSED (90 aa). 2 LRR repeats span residues 3935 to 3959 and 3977 to 4004; these read LDNR…AFAT and LKKL…LEKM. One can recognise a RdRp Nsp8 cofactor domain in the interval 3943–4140; the sequence is AIASEFSSLP…LRANSAVKLQ (198 aa). In terms of domain architecture, Nsp9 ssRNA-binding spans 4141-4253; that stretch reads NNELSPVALR…GSLAATVRLQ (113 aa). Positions 4254–4392 constitute an ExoN/MTase coactivator domain; it reads AGNATEVPAN…CDQLREPMLQ (139 aa). Zn(2+)-binding residues include Cys4327, Cys4330, His4336, Cys4343, Cys4370, Cys4373, Cys4381, and Cys4383. The NiRAN domain occupies 4399 to 4653; that stretch reads FLNRVCGVSA…TAESHVDTDL (255 aa). The stretch at 4591 to 4616 is one LRR 7 repeat; the sequence is AGIVGVLTLDNQDLNGNWYDFGDFIQ. Positions 4601 and 4610 each coordinate Mn(2+). Residues 4658-4756 enclose the Nsp12 Interface domain; it reads IKWDLLKYDF…HNQDVNLHSS (99 aa). The Zn(2+) site is built by His4687, Cys4693, Cys4698, Cys4702, and Cys4879. One can recognise a Nsp12 RNA-dependent RNA polymerase domain in the interval 4757–5324; the sequence is RLSFKELLVY…AMYTPHTVLQ (568 aa). The interval 4759–4973 is rdRp Fingers N-ter; that stretch reads SFKELLVYAA…HQKLLKSIAA (215 aa). The tract at residues 4937-4947 is interaction with RMP Remdesivir; the sequence is KYAISAKNRAR. Residues 4974 to 5012 are rdRp Palm N-ter; sequence TRGATVVIGTSKFYGGWHNMLKTVYSDVENPHLMGWDYP. The region spanning 5004–5166 is the RdRp catalytic domain; that stretch reads PHLMGWDYPK…CFNSTYASQG (163 aa). Residues 5013-5071 are rdRp Fingers C-ter; that stretch reads KCDRAMPNMLRIMASLVLARKHTTCCSLSHRFYRLANECAQVLSEMVMCGGSLYVKPGG. Zn(2+) is bound by residues His5034, Cys5037, and Cys5038. The rdRp Palm C-ter stretch occupies residues 5072 to 5207; that stretch reads TSSGDATTAY…TKGPHEFCSQ (136 aa). Catalysis depends on residues Ser5151, Asp5152, and Asp5153. Residues 5208-5324 form a rdRp Thumb region; that stretch reads HTMLVKQGDD…AMYTPHTVLQ (117 aa). In terms of domain architecture, CV ZBD spans 5325 to 5437; it reads AVGACVLCNS…TDFNAIATCD (113 aa). Positions 5329, 5332, 5340, 5343, 5350, 5353, 5357, 5363, 5374, 5379, 5396, and 5399 each coordinate Zn(2+). The LRR 8 repeat unit spans residues 5552–5572; that stretch reads TSHTVMPLSAPTLVPQEHYVR. Positions 5581 to 5762 constitute a (+)RNA virus helicase ATP-binding domain; that stretch reads NISDEFSSNV…MKTIGPDMFL (182 aa). 5606–5613 is an a ribonucleoside 5'-triphosphate binding site; it reads GPPGTGKS. The 170-residue stretch at 5763–5932 folds into the (+)RNA virus helicase C-terminal domain; sequence GTCRRCPAEI…TLQAENVTGL (170 aa). Positions 5997–6212 constitute an ExoN domain; the sequence is MFITREEAIR…RCLAVHECFV (216 aa). Active-site residues include Asp6015, Glu6017, and Glu6116. Mg(2+) contacts are provided by Asp6015, Glu6017, and Glu6116. The Zn(2+) site is built by Cys6132, Cys6135, Cys6151, His6154, His6182, Cys6186, and His6189. Active-site residues include His6193 and Asp6198. His6193 and Asp6198 together coordinate Mg(2+). Zn(2+) is bound at residue Cys6204. An N7-MTase domain is found at 6221–6452; the sequence is YPIIGDELKI…NLWNTFTRLQ (232 aa). Residue 6256-6262 participates in S-adenosyl-L-methionine binding; the sequence is DIGNPKA. The segment at 6339–6353 is gpppA-binding; that stretch reads CDGGSLYVNKHAFHT. Zn(2+)-binding residues include Cys6377, Cys6402, Cys6409, and His6412. The Nsp15 N-terminal oligomerization domain maps to 6453-6513; it reads SLENVAFNVV…NVAFELWAKR (61 aa). One can recognise an AV-Nsp11N/CoV-Nsp15M domain in the interval 6514-6639; it reads NIKPVPEVKI…YYKKVDGVVQ (126 aa). Residues 6656–6795 form the NendoU domain; it reads KPRSQMEIDF…KDGHVETFYP (140 aa). His6686 (proton donor; for uridylate-specific endoribonuclease nsp15 activity) is an active-site residue. His6701 (proton acceptor; for uridylate-specific endoribonuclease nsp15 activity) is an active-site residue. Lys6741 acts as the For uridylate-specific endoribonuclease nsp15 activity in catalysis. Residues 6741-6745 and 6792-6796 each bind uracil; these read KCVCS and TFYPK. Positions 6800–7094 constitute a Nidovirus-type SAM-dependent 2'-O-MTase domain; the sequence is SQAWQPGVAM…RVVISSDVLV (295 aa). An LRR 9 repeat occupies 6817-6841; the sequence is RMLLEKCDLQNYGDSATLPKGIMMN. Residues Lys6844, Asp6928, Lys6968, and Glu7001 contribute to the active site.

It belongs to the coronaviruses polyprotein 1ab family. As to quaternary structure, interacts with host GIGYF2. In terms of assembly, may form homohexamers. Interacts with N protein. 3CL-PRO exists as monomer and homodimer. Only the homodimer shows catalytic activity. Interacts with host FBXO22; this interaction promotes the proteasomal degradation of nsp5. As to quaternary structure, interacts with PL-PRO and nsp6. In terms of assembly, forms homodimers. Interacts with host ZFYVE1 (DFCP1), which leads to ER and DMVs binding to lipid droplets. Interacts with host TBK1; this interaction decreases IRF3 phosphorylation by 57%, which leads to reduced IFN-beta production. Interacts with nsp8 and nsp12 to form the replication-transcription complex (RTC): nsp12, nsp7, two subunits of nsp8, and up to two subunits of nsp13. Eight copies of nsp7 and eight copies of nsp8 assemble to form a heterohexadecamer dsRNA-encircling ring structure. As to quaternary structure, interacts with nsp7, nsp13 and nsp12 to form the replication-transcription complex (RTC): nsp12, nsp7, two subunits of nsp8, and up to two subunits of nsp13. Eight copies of nsp7 and eight copies of nsp8 assemble to form a heterohexadecamer dsRNA-encircling ring structure. In terms of assembly, is a dimer. Interacts with NSP12. Interacts with host SND1. Forms a dodecamer and interacts with nsp14 and nsp16; these interactions enhance nsp14 and nsp16 enzymatic activities. As to quaternary structure, interacts with nsp7 and nsp8 to form the replication-transcription complex (RTC): nsp12, nsp7, two subunits of nsp8, and up to two subunits of nsp13. Interacts with nsp9. In terms of assembly, interacts with nsp8 to form the replication-transcription complex (RTC): nsp12, nsp7, two subunits of nsp8, and up to two subunits of nsp13. Interacts with host TBK1; this interaction inhibits TBK1 phosphorylation and decreases by 75% IRF3 phosphorylation, which leads to reduced IFN-beta production. Interacts (via N-terminus) with DDX1. Interacts with nsp10. As to quaternary structure, homohexamer. In terms of assembly, interacts with nsp10. The cofactor is Mn(2+). It depends on Mg(2+) as a cofactor. In terms of processing, specific enzymatic cleavages in vivo by its own proteases yield mature proteins. 3CL-PRO and PL-PRO proteinases are autocatalytically processed.

The protein localises to the host cytoplasm. The protein resides in the host endosome. It localises to the host endoplasmic reticulum membrane. Its subcellular location is the host Golgi apparatus. It is found in the host nucleus. The protein localises to the host perinuclear region. The protein resides in the host endoplasmic reticulum. It localises to the host endoplasmic reticulum-Golgi intermediate compartment. It carries out the reaction RNA(n) + a ribonucleoside 5'-triphosphate = RNA(n+1) + diphosphate. It catalyses the reaction ATP + H2O = ADP + phosphate + H(+). The catalysed reaction is TSAVLQ-|-SGFRK-NH2 and SGVTFQ-|-GKFKK the two peptides corresponding to the two self-cleavage sites of the SARS 3C-like proteinase are the two most reactive peptide substrates. The enzyme exhibits a strong preference for substrates containing Gln at P1 position and Leu at P2 position.. The enzyme catalyses Thiol-dependent hydrolysis of ester, thioester, amide, peptide and isopeptide bonds formed by the C-terminal Gly of ubiquitin (a 76-residue protein attached to proteins as an intracellular targeting signal).. It carries out the reaction a 5'-end (N(7)-methyl 5'-triphosphoguanosine)-ribonucleoside in mRNA + S-adenosyl-L-methionine = a 5'-end (N(7)-methyl 5'-triphosphoguanosine)-(2'-O-methyl-ribonucleoside) in mRNA + S-adenosyl-L-homocysteine + H(+). It catalyses the reaction uridylyl-uridylyl-ribonucleotide-RNA = a 3'-end uridylyl-2',3'-cyclophospho-uridine-RNA + a 5'-end dephospho-ribonucleoside-RNA. The catalysed reaction is a 5'-end diphospho-ribonucleoside in mRNA + GTP + H(+) = a 5'-end (5'-triphosphoguanosine)-ribonucleoside in mRNA + diphosphate. The enzyme catalyses a 5'-end (5'-triphosphoguanosine)-ribonucleoside in mRNA + S-adenosyl-L-methionine = a 5'-end (N(7)-methyl 5'-triphosphoguanosine)-ribonucleoside in mRNA + S-adenosyl-L-homocysteine. Its activity is regulated as follows. Inhibited in vitro by GRL-0617. Inhibited ex vivo by K22. It may shift NSP6 zippering activity towards the nuclear envelope, thereby impairing formation of the NSP6-compartment necessary for viral transcription/replication. With respect to regulation, inhibited by Remdesivir antiviral drug (GS-5734). Its activity is regulated as follows. Inhibited by Remdesivir antiviral drug (GS-5734) through non-obligate RNA chain termination. Inhibited by pyridone-containing alpha-ketoamides compounds 13a and 13b. In turn, alpha-ketoamide 13b (tert-butyl (1-((S)-1-(((S)-4-(benzylamino)-3,4-dioxo-1-((S)-2-oxopyrrolidin-3-yl)butan-2-yl)amino)-3-cyclopropyl-1-oxopropan-2-yl)-2-oxo-1,2-dihydropyridin-3-yl)carbamate) inhibits SARS-CoV-2 replication in human lung cells. Inhibited ex vivo by michael acceptor inhibitor N3. Inhibited ex vivo by compound 11a and 11b. Multifunctional protein involved in the transcription and replication of viral RNAs. Contains the proteinases responsible for the cleavages of the polyprotein. Its function is as follows. Inhibits host translation by associating with the open head conformation of the 40S subunit. The C-terminus binds to and obstructs ribosomal mRNA entry tunnel. Thereby inhibits antiviral response triggered by innate immunity or interferons. The nsp1-40S ribosome complex further induces an endonucleolytic cleavage near the 5'UTR of host mRNAs, targeting them for degradation. This inhibits the integrated stress response (ISR) in the infected cell by preventing EIF2S1/eIF2-alpha phosphorylation upstream of stress granule formation and depletes host G3BP1. Viral mRNAs less susceptible to nsp1-mediated inhibition of translation, because of their 5'-end leader sequence. Functionally, enhances mRNA repression of the 4EHP-GYF2 complex in the host, thereby inhibiting the antiviral response and facilitating SARS-CoV-2 replication. Possibly acts in cooperation with nsp1, which induces ribosome stalling on host mRNA, triggering mRNA repression by the host 4EHP-GYF2 complex which is enhanced by nsp2. In terms of biological role, responsible for the cleavages located at the N-terminus of the replicase polyprotein. Participates together with nsp4 in the assembly of virally-induced cytoplasmic double-membrane vesicles necessary for viral replication. Antagonizes innate immune induction of type I interferon by blocking the phosphorylation, dimerization and subsequent nuclear translocation of host IRF3. Also prevents host NF-kappa-B signaling. In addition, PL-PRO possesses a deubiquitinating/deISGylating activity and processes both 'Lys-48'- and 'Lys-63'-linked polyubiquitin chains from cellular substrates. Cleaves preferentially ISG15 from antiviral protein IFIH1 (MDA5), but not RIGI. Can play a role in host ADP-ribosylation by ADP-ribose. Plays a role in the formation and maintenance of double membrane vesicles (DMVs) replication organelles. DMVs are formed by nsp3 and nsp4, while nsp6 zippers ER membranes and connects to lipid droplets. Plays a role in the formation and maintenance of double membrane vesicles (DMVs) replication organelles. DMVs are formed by nsp3 and nsp4, while nsp6 zippers ER membranes and connects to lipid droplets. Its function is as follows. Cleaves the C-terminus of replicase polyprotein at 11 sites. Recognizes substrates containing the core sequence [ILMVF]-Q-|-[SGACN]. Cleaves and inactivates human TRMT1, preventing tRNA guanine(26)-dimethylation of tRNAs. May cleave human NLRP1 in lung epithelial cells, thereby activating the NLRP1 inflammasome pathway. May cleave human GSDMD, triggering alternative GSDME-mediated epithelial cell death upon activation of the NLRP1 inflammasome, which may enhance the release interleukins 1B, 6, 16 and 18. Also able to bind an ADP-ribose-1''-phosphate (ADRP). Functionally, plays a role in the formation and maintenance of double membrane vesicles (DMVs) replication organelles. DMVs are formed by nsp3 and nsp4, while nsp6 zippers ER membranes and connects to lipid droplets. LDs are consumed during DMV formation. Binds to host TBK1 without affecting TBK1 phosphorylation; the interaction with TBK1 decreases IRF3 phosphorylation, which leads to reduced IFN-beta production. In terms of biological role, plays a role in viral RNA synthesis. Forms a hexadecamer with nsp8 (8 subunits of each) that may participate in viral replication by acting as a primase. Alternatively, may synthesize substantially longer products than oligonucleotide primers. Plays a role in viral RNA synthesis. Forms a hexadecamer with nsp7 (8 subunits of each) that may participate in viral replication by acting as a primase. Alternatively, may synthesize substantially longer products than oligonucleotide primers. Interacts with ribosome signal recognition particle RNA (SRP). Together with NSP9, suppress protein integration into the cell membrane, thereby disrupting host immune defenses. Its function is as follows. Forms a primer, NSP9-pU, which is utilized by the polymerase for the initiation of RNA chains. Interacts with ribosome signal recognition particle RNA (SRP). Together with NSP8, suppress protein integration into the cell membrane, thereby disrupting host immune defenses. Functionally, plays a pivotal role in viral transcription by stimulating both nsp14 3'-5' exoribonuclease and nsp16 2'-O-methyltransferase activities. Therefore plays an essential role in viral mRNAs cap methylation. In terms of biological role, RNA-directed RNA polymerase that catalyzes the transcription of viral genomic and subgenomic RNAs. Acts in complex with nsp7 and nsp8 to transcribe both the minus and positive strands of genomic RNA. The kinase-like NiRAN domain of NSP12 attaches one or more nucleotides to the amino terminus of NSP9, forming a covalent RNA-protein intermediate that serves as transcription/replication primer. Subgenomic RNAs (sgRNAs) are formed by discontinuous transcription: The polymerase has the ability to pause at transcription-regulating sequences (TRS) and jump to the leader TRS, resulting in a major deletion. This creates a series of subgenomic RNAs that are replicated, transcribed and translated. In addition, Nsp12 is a subunit of the viral RNA capping enzyme that catalyzes the RNA guanylyltransferase reaction for genomic and sub-genomic RNAs. Subsequently, the NiRAN domain transfers RNA to GDP, and forms the core cap structure GpppA-RNA. Plays a role in viral RNA synthesis. Multi-functional protein with a zinc-binding domain in N-terminus displaying RNA and DNA duplex-unwinding activities with 5' to 3' polarity. Activity of helicase is dependent on magnesium. Binds to host TBK1 and inhibits TBK1 phosphorylation; the interaction with TBK1 decreases IRF3 phosphorylation, which leads to reduced IFN-beta production. Its function is as follows. Plays a role in viral RNA synthesis through two distinct activities. The N7-guanine methyltransferase activity plays a role in the formation of the cap structure GpppA-RNA. The proofreading exoribonuclease reduces the sensitivity of the virus to RNA mutagens during replication. This activity acts on both ssRNA and dsRNA in a 3'-5' direction. Functionally, plays a role in viral transcription/replication and prevents the simultaneous activation of host cell dsRNA sensors, such as MDA5/IFIH1, OAS, and PKR. Acts by degrading the 5'-polyuridines generated during replication of the poly(A) region of viral genomic and subgenomic RNAs. Catalyzes a two-step reaction in which a 2'3'-cyclic phosphate (2'3'-cP) is first generated by 2'-O transesterification, which is then hydrolyzed to a 3'-phosphate (3'-P). If not degraded, poly(U) RNA would hybridize with poly(A) RNA tails and activate host dsRNA sensors. May bind genomic dsRNA in association with the replication-transcription complex (RTC), and play a role in nsp12 discontinous transcription. In terms of biological role, methyltransferase that mediates mRNA cap 2'-O-ribose methylation to the 5'-cap structure of viral mRNAs. N7-methyl guanosine cap is a prerequisite for binding of nsp16. Therefore, it plays an essential role in cap methylation of viral mRNAs, which is essential to evade the immune system, especially when restricted by human IFIT1 and IFIT3. May disrupt host mRNA splicing in nucleus by interacting with pre-mRNA Recognition Domains of the U1 and U2 snRNAs. This chain is Replicase polyprotein 1ab (rep), found in Homo sapiens (Human).